A 305-amino-acid chain; its full sequence is MGDFIGHISPGLFLVFYGLYQAVIVSRAVIFNDSLLYPSYLSKNKGKWARLWKIAHAGWLKVVIGSLLIVYEISCVKEGLTLMTKGVPPRFMYPKEWQHLTMFFLLTLDGCVEMVSKNVLRQRCVLLERGATVLGVYVLLLLLVSHVKESSGVELQVHSLLILVVFLLMLVLTAELWAPEMFHLWMIETFLILIMGSWLIQAAFILFRPVSGFPWEDDDISDIMFVTTFFCWHVMINALCMLGIYGVSSFWHRCYSPSLRPMGSKEALYQESSSGTFYKLLQEAEQQDKDDQAPLLSKISPCDRA.

The helical transmembrane segment at 4-24 (FIGHISPGLFLVFYGLYQAVI) threads the bilayer. A glycan (N-linked (GlcNAc...) asparagine) is linked at N32. A run of 5 helical transmembrane segments spans residues 54–74 (IAHAGWLKVVIGSLLIVYEIS), 124–144 (CVLLERGATVLGVYVLLLLLV), 159–179 (SLLILVVFLLMLVLTAELWAP), 187–207 (IETFLILIMGSWLIQAAFILF), and 223–243 (IMFVTTFFCWHVMINALCMLG). The tract at residues 285-305 (EQQDKDDQAPLLSKISPCDRA) is disordered.

Belongs to the TMEM45 family.

It is found in the membrane. In Mus musculus (Mouse), this protein is Transmembrane epididymal protein 1A.